A 287-amino-acid chain; its full sequence is ATP synthase gamma chain (287 aa).

Belongs to the ATPase gamma chain family. In terms of assembly, F-type ATPases have 2 components, CF(1) - the catalytic core - and CF(0) - the membrane proton channel. CF(1) has five subunits: alpha(3), beta(3), gamma(1), delta(1), epsilon(1). CF(0) has three main subunits: a, b and c.

Its subcellular location is the cell inner membrane. In terms of biological role, produces ATP from ADP in the presence of a proton gradient across the membrane. The gamma chain is believed to be important in regulating ATPase activity and the flow of protons through the CF(0) complex. This Klebsiella pneumoniae subsp. pneumoniae (strain ATCC 700721 / MGH 78578) protein is ATP synthase gamma chain.